The primary structure comprises 1017 residues: MASPSSFSSQNYKFNVFASFHGPDVRKTLLSHIRLQFNRNGITMFDDQKIVRSATIGPSLVEAIKESRISIVILSKKYASSSWCLDELVEILECKKAMGQIVMTIFYGVDPSDVRKQIGKFGIAFNETCARKTEEERQKWSKALNQVSNIAGEDFLRWDNEAIMIEKIARDVLDKLNATPSRDFDGMVGIEAHLREIKSLLDLDNVEVKIVAIAGPAGIGKTTIARALYGLLSKRFQLSCFVDNLRGSYHSGFDEYGFKLHLQEQFLSKVLNQSGMRICHLGAIKENLSDQRVLIILDDVNKLKQLEALANETTWFGPGSRIVVTTENKELLQQHGINNTYHVGFPSDEDALKILCSYAFKQTSPRHGFEELSESVTKLCGKLPLGLCVVGSSLRGKKEDEWEDVVTRLETILDQDIEDVLRVGYESLDENAQTLFLHIAIFFNKEDGDLVKTMFAESDLDVKYGLKILENRSLIKMKIFSNGDTKIVMHRLLQQMGKRAIQKQEPWERQILIDAREICHVLEHAKGTGWNVHGMSFDISRISEVSIRKKAFKRMPNLQFLKVYKSKDDGNNRMHVPEEMDFPCLLRLLDWKAYPSKSLPPTFNPEHLVELNMHSSQLEYLWQGTQPLKNLKKMDLSQSKNLKQLPDLSNATNLEYLYLMGCESLIEIPSSISHLHKLEMLATVGCINLEVIPAHMNLESLQTVYLGGCSRLRNIPVMSTNIRYLFITNTAVEGVPLCPGLKTLDVSGSRNFKGLLTHLPTSLTTLNLCYTDIERIPDCFKSLHQLKGVNLRGCRRLASLPELPRSLLTLVADDCESLETVFCPLNTLKASFSFANCFKLDREARRAIIQQSFFMGKAVLPGREVPAVFDHRAKGYSLTIRPDGNPYTSFVFCVVVSRNQKSDKTIPPSLLWRRIIAQDEGYPVEVWNRIGDVFKYRTEHLLIFHFDFLEFDNRDIVFEFSSESHDFDIIECGAKVLAEKSIKESYESGSDQAFEDDVVFEPSKAFGDEKYGDCCIL.

A TIR domain is found at 12–176; the sequence is YKFNVFASFH…KIARDVLDKL (165 aa). Glu-87 is a catalytic residue. The region spanning 191-447 is the NB-ARC domain; it reads EAHLREIKSL…HIAIFFNKED (257 aa). LRR repeat units follow at residues 539–562, 583–605, 606–628, 629–652, 654–675, 676–698, 699–724, 738–760, 761–782, and 784–809; these read ISRISEVSIRKKAFKRMPNLQFLK, PCLLRLLDWKAYPSKSLPPTFNP, EHLVELNMHSSQLEYLWQGTQPL, KNLKKMDLSQSKNLKQLPDLSNAT, LEYLYLMGCESLIEIPSSISHL, HKLEMLATVGCINLEVIPAHMNL, ESLQTVYLGGCSRLRNIPVMSTNIRY, CPGLKTLDVSGSRNFKGLLTHLP, TSLTTLNLCYTDIERIPDCFKS, and HQLKGVNLRGCRRLASLPELPRSLLT.

It catalyses the reaction NAD(+) + H2O = ADP-D-ribose + nicotinamide + H(+). TIR-NB-LRR receptor-like protein that confers resistance to the pathogen Leptosphaeria maculans (blackleg disease). The sequence is that of Disease resistance protein RML1B from Arabidopsis thaliana (Mouse-ear cress).